The primary structure comprises 438 residues: Telomeric repeat-binding factor 1 (438 aa).

A compositionally biased stretch (polar residues) spans 1-10 (MAEDVSSTAP). Residues 1–36 (MAEDVSSTAPSPRGCADGRDADPTEEQMAQTQRNDQ) form a disordered region. Position 2 is an N-acetylalanine (Ala2). Position 11 is a phosphoserine (Ser11). The interval 58 to 268 (EEEEEDSGLV…AAAKVVESKR (211 aa)) is TRFH dimerization. Lys213 is covalently cross-linked (Glycyl lysine isopeptide (Lys-Gly) (interchain with G-Cter in SUMO2)). Phosphoserine; by ATM is present on Ser219. The interaction with RLIM stretch occupies residues 265-378 (ESKRTRTITS…PVTPEKHRAR (114 aa)). The tract at residues 268 to 311 (RTRTITSQDKPSGNDVEMETEANLDTRKSVSDKQSAVTESSEGT) is disordered. Over residues 299–311 (DKQSAVTESSEGT) the composition is skewed to polar residues. A Glycyl lysine isopeptide (Lys-Gly) (interchain with G-Cter in SUMO2) cross-link involves residue Lys325. Positions 326 to 375 (LQHGTQQQDLNKKERRVGTPQSTKKKKESRRATESRIPVSKSQPVTPEKH) are disordered. Residues 337–356 (KKERRVGTPQSTKKKKESRR) carry the Nuclear localization signal motif. Residue Lys366 forms a Glycyl lysine isopeptide (Lys-Gly) (interchain with G-Cter in SUMO2) linkage. The 58-residue stretch at 375–432 (HRARKRQAWLWEEDKNLRSGVRKYGEGNWSKILLHYKFNNRTSVMLKDRWRTMKKLKL) folds into the HTH myb-type domain. A DNA-binding region (H-T-H motif) is located at residues 403 to 428 (WSKILLHYKFNNRTSVMLKDRWRTMK).

As to quaternary structure, homodimer; can contain both isoforms. Found in a complex with POT1; TINF2 and TNKS1. Interacts with ATM, TINF2, TNKS1, TNKS2, PINX1, NEK2 and MAPRE1. Component of the shelterin complex (telosome) composed of TERF1, TERF2, TINF2, TERF2IP ACD and POT1. Interacts with RLIM (via N-terminus). Interacts with FBXO4. Interaction with TINF2 protects against interaction with FBXO4 and subsequent polyubiquitination and proteasomal degradation. Interacts with GNL3L; this interaction promotes homodimerization. Interacts with TIN2. Interactions with GNL3L and TIN2 are mutually exclusive. Interacts with RTEL1. Interacts with CCDC79/TERB1. Phosphorylated preferentially on Ser-219 in an ATM-dependent manner in response to ionizing DNA damage. In terms of processing, ADP-ribosylation by TNKS1 or TNKS2 diminishes its ability to bind to telomeric DNA. Post-translationally, ubiquitinated by RLIM/RNF12, leading to its degradation by the proteasome. Ubiquitinated by a SCF (SKP1-CUL1-F-box protein) ubiquitin-protein ligase complex, leading to its degradation by the proteasome.

The protein resides in the nucleus. The protein localises to the chromosome. It localises to the telomere. It is found in the cytoplasm. Its subcellular location is the cytoskeleton. The protein resides in the spindle. Its function is as follows. Binds the telomeric double-stranded 5'-TTAGGG-3' repeat and negatively regulates telomere length. Involved in the regulation of the mitotic spindle. Component of the shelterin complex (telosome) that is involved in the regulation of telomere length and protection. Shelterin associates with arrays of double-stranded 5'-TTAGGG-3' repeats added by telomerase and protects chromosome ends; without its protective activity, telomeres are no longer hidden from the DNA damage surveillance and chromosome ends are inappropriately processed by DNA repair pathways. The chain is Telomeric repeat-binding factor 1 (TERF1) from Cricetulus griseus (Chinese hamster).